The sequence spans 62 residues: U8-theraphotoxin-Cg1a 2 (62 aa).

The signal sequence occupies residues 1 to 21 (MKTLVLFIIFGLAALFLLSSA). A propeptide spanning residues 22–29 (TELEETER) is cleaved from the precursor. Intrachain disulfides connect Cys-31–Cys-46, Cys-38–Cys-51, and Cys-45–Cys-58.

This sequence belongs to the neurotoxin 10 (Hwtx-1) family. 30 (Jztx-14) subfamily. Expressed by the venom gland.

The protein localises to the secreted. Its function is as follows. Probable ion channel inhibitor. The sequence is that of U8-theraphotoxin-Cg1a 2 from Chilobrachys guangxiensis (Chinese earth tiger tarantula).